Consider the following 488-residue polypeptide: Catalase (488 aa).

Residues 1–24 form a disordered region; sequence MTERKNLTTNQGTPVGDNQNSMTA. The segment covering 7–23 has biased composition (polar residues); it reads LTTNQGTPVGDNQNSMT. Residues histidine 55 and asparagine 128 contribute to the active site. Tyrosine 338 provides a ligand contact to heme.

This sequence belongs to the catalase family. It depends on heme as a cofactor.

It localises to the cytoplasm. It carries out the reaction 2 H2O2 = O2 + 2 H2O. Functionally, decomposes hydrogen peroxide into water and oxygen; serves to protect cells from the toxic effects of hydrogen peroxide. In Listeria innocua serovar 6a (strain ATCC BAA-680 / CLIP 11262), this protein is Catalase (kat).